Here is a 208-residue protein sequence, read N- to C-terminus: Granulocyte colony-stimulating factor (208 aa).

An N-terminal signal peptide occupies residues M1–A30. 2 disulfide bridges follow: C72–C78 and C100–C110. T169 is a glycosylation site (O-linked (GalNAc...) threonine).

The protein belongs to the IL-6 superfamily. In terms of assembly, monomer. In terms of processing, O-glycosylated.

The protein localises to the secreted. Functionally, granulocyte/macrophage colony-stimulating factors are cytokines that act in hematopoiesis by controlling the production, differentiation, and function of 2 related white cell populations of the blood, the granulocytes and the monocytes-macrophages. This CSF induces granulocytes. The sequence is that of Granulocyte colony-stimulating factor (Csf3) from Mus musculus (Mouse).